The chain runs to 675 residues: NADH-ubiquinone oxidoreductase 75 kDa subunit (675 aa).

The 2Fe-2S ferredoxin-type domain occupies 2-80 (KNISFKVNDF…SMNIYTNTLK (79 aa)). 4 residues coordinate [2Fe-2S] cluster: Cys-36, Cys-47, Cys-50, and Cys-64. One can recognise a 4Fe-4S His(Cys)3-ligated-type domain in the interval 80–119 (KVKKARESVLEFLLANHPLDCPICDQGGECDLQDQSVVFG). [4Fe-4S] cluster is bound by residues His-96, Cys-100, Cys-103, Cys-109, Cys-148, Cys-151, Cys-154, and Cys-198. One can recognise a 4Fe-4S Mo/W bis-MGD-type domain in the interval 217 to 273 (LKSYNSIDVLDSLHSNIRVDIRGTKIMRILPRVNSELNEDWITDKIRFSYDSFRRQR).

The protein belongs to the complex I 75 kDa subunit family. In terms of assembly, complex I is composed of about 30 different subunits. Requires [2Fe-2S] cluster as cofactor. [4Fe-4S] cluster is required as a cofactor.

It localises to the mitochondrion inner membrane. It carries out the reaction a ubiquinone + NADH + 5 H(+)(in) = a ubiquinol + NAD(+) + 4 H(+)(out). Functionally, core subunit of the mitochondrial membrane respiratory chain NADH dehydrogenase (Complex I) that is believed to belong to the minimal assembly required for catalysis. Complex I functions in the transfer of electrons from NADH to the respiratory chain. The immediate electron acceptor for the enzyme is believed to be ubiquinone. This is the largest subunit of complex I and it is a component of the iron-sulfur (IP) fragment of the enzyme. It may form part of the active site crevice where NADH is oxidized. The chain is NADH-ubiquinone oxidoreductase 75 kDa subunit (NAD11) from Acanthamoeba castellanii (Amoeba).